Reading from the N-terminus, the 480-residue chain is Major facilitator superfamily domain-containing protein 12 (480 aa).

N-acetylmethionine is present on M1. The Cytoplasmic portion of the chain corresponds to 1 to 26 (MGPGPPAAGAAPSPRPLSLVARLSYA). Residues 27–47 (VGHFLNDLCASMWFTYLLLYL) form a helical membrane-spanning segment. Residues 48 to 56 (HSVRAYSSR) lie on the Lumenal side of the membrane. A helical membrane pass occupies residues 57–77 (GAGLLLLLGQVADGLCTPLVG). Residues 78 to 97 (YEADRAASCCARYGPRKAWH) lie on the Cytoplasmic side of the membrane. The helical transmembrane segment at 98-118 (LVGTVCVLLSFPFIFSPCLGC) threads the bilayer. The Lumenal portion of the chain corresponds to 119 to 124 (GAATPE). The helical transmembrane segment at 125 to 145 (WAALLYYGPFIVIFQFGWAST) threads the bilayer. The Cytoplasmic segment spans residues 146–170 (QISHLSLIPELVTNDHEKVELTALR). A helical transmembrane segment spans residues 171-191 (YAFTVVANITVYGAAWLLLHL). Residues 192 to 218 (QGSSRVEPTQDISISDQLGGQDVPVFR) are Lumenal-facing. The chain crosses the membrane as a helical span at residues 219-239 (NLSLLVVGVGAVFSLLFHLGT). The Cytoplasmic segment spans residues 240 to 279 (RERRRPHAEEPGEHTPLLAPATAQPLLLWKHWLREPAFYQ). At T254 the chain carries Phosphothreonine; by MTOR. A helical membrane pass occupies residues 280–302 (VGILYMTTRLIVNLSQTYMAMYL). Residues 303–310 (TYSLHLPK) lie on the Lumenal side of the membrane. The helical transmembrane segment at 311 to 331 (KFIATIPLVMYLSGFLSSFLM) threads the bilayer. At 332 to 347 (KPINKCIGRNMTYFSG) the chain is on the cytoplasmic side. 2 helical membrane passes run 348–368 (LLVI…GVAV) and 369–389 (YAAA…SLAM). Residues 390 to 402 (TADLIGPHTNSGA) are Cytoplasmic-facing. A helical membrane pass occupies residues 403 to 423 (FVYGSMSFLDKVANGLAVMAI). At 424–446 (QSLHPCPSELCCRACVSFYHWAM) the chain is on the lumenal side. Residues 447–467 (VAVTGGVGVAAALCLCSLLLW) form a helical membrane-spanning segment. Residues 468–480 (PTRLRRWDRDARP) are Cytoplasmic-facing.

Belongs to the major facilitator superfamily. In terms of processing, phosphorylation at Thr-254 by MTOR via mTORC1 pathway promotes cysteine transport in lysosomes, thereby regulating lysosomal cysteine and cystine storage and redox homeostasis. Widely expressed, with high expression in primary melanocytes.

The protein localises to the melanosome membrane. Its subcellular location is the lysosome membrane. It carries out the reaction L-cysteine(in) = L-cysteine(out). Transporter that mediates the import of cysteine into melanosomes, thereby regulating skin pigmentation. In melanosomes, cysteine import is required both for normal levels of cystine, the oxidized dimer of cysteine, and provide cysteine for the production of the cysteinyldopas used in pheomelanin synthesis, thereby regulating skin pigmentation. Also catalyzes import of cysteine into lysosomes in non-pigmented cells, regulating lysosomal cystine and cysteine storage, which is essnetial for redox homeostasis. In Homo sapiens (Human), this protein is Major facilitator superfamily domain-containing protein 12.